The sequence spans 389 residues: STE20-related kinase adapter protein alpha (389 aa).

Positions 11-321 (YELLTIIGRG…AGALLNHPFF (311 aa)) constitute a Protein kinase domain.

Belongs to the protein kinase superfamily. STE Ser/Thr protein kinase family. STE20 subfamily. As to quaternary structure, component of a trimeric complex composed of STK11/LKB1, STRAD (STRADA or STRADB) and CAB39/MO25 (CAB39/MO25alpha or CAB39L/MO25beta): the complex tethers STK11/LKB1 in the cytoplasm and stimulates its catalytic activity. In terms of tissue distribution, expressed in brain, hypothalamus, heart and skeletal muscle.

It is found in the nucleus. The protein localises to the cytoplasm. Its function is as follows. Pseudokinase which, in complex with CAB39/MO25 (CAB39/MO25alpha or CAB39L/MO25beta), binds to and activates STK11/LKB1. Adopts a closed conformation typical of active protein kinases and binds STK11/LKB1 as a pseudosubstrate, promoting conformational change of STK11/LKB1 in an active conformation. The polypeptide is STE20-related kinase adapter protein alpha (STRADA) (Gallus gallus (Chicken)).